The sequence spans 339 residues: tRNA-specific 2-thiouridylase MnmA (339 aa).

ATP is bound by residues 8–15 and M34; that span reads AMSGGVDS. Catalysis depends on C94, which acts as the Nucleophile. A disulfide bond links C94 and C188. G118 is a binding site for ATP. An interaction with tRNA region spans residues 136 to 138; that stretch reads KDQ. C188 serves as the catalytic Cysteine persulfide intermediate. Residues 290 to 291 are interaction with tRNA; that stretch reads RY.

This sequence belongs to the MnmA/TRMU family.

Its subcellular location is the cytoplasm. It carries out the reaction S-sulfanyl-L-cysteinyl-[protein] + uridine(34) in tRNA + AH2 + ATP = 2-thiouridine(34) in tRNA + L-cysteinyl-[protein] + A + AMP + diphosphate + H(+). Its function is as follows. Catalyzes the 2-thiolation of uridine at the wobble position (U34) of tRNA, leading to the formation of s(2)U34. The sequence is that of tRNA-specific 2-thiouridylase MnmA from Nitratiruptor sp. (strain SB155-2).